The sequence spans 486 residues: Membrane-bound lytic murein transglycosylase F (486 aa).

Positions 1 to 28 (MFAHTLFRKRCAIWLLAIGIFLMLGSCA) are cleaved as a signal peptide. The segment at 29 to 267 (EKPSELERIK…RLRERYYGHV (239 aa)) is non-LT domain. The tract at residues 268–486 (DVLGYVGAYA…TDLMEELPPL (219 aa)) is LT domain. Residue Glu-314 is part of the active site.

This sequence in the N-terminal section; belongs to the bacterial solute-binding protein 3 family. In the C-terminal section; belongs to the transglycosylase Slt family.

Its subcellular location is the cell outer membrane. The catalysed reaction is Exolytic cleavage of the (1-&gt;4)-beta-glycosidic linkage between N-acetylmuramic acid (MurNAc) and N-acetylglucosamine (GlcNAc) residues in peptidoglycan, from either the reducing or the non-reducing ends of the peptidoglycan chains, with concomitant formation of a 1,6-anhydrobond in the MurNAc residue.. Functionally, murein-degrading enzyme that degrades murein glycan strands and insoluble, high-molecular weight murein sacculi, with the concomitant formation of a 1,6-anhydromuramoyl product. Lytic transglycosylases (LTs) play an integral role in the metabolism of the peptidoglycan (PG) sacculus. Their lytic action creates space within the PG sacculus to allow for its expansion as well as for the insertion of various structures such as secretion systems and flagella. The protein is Membrane-bound lytic murein transglycosylase F of Stutzerimonas stutzeri (strain A1501) (Pseudomonas stutzeri).